We begin with the raw amino-acid sequence, 184 residues long: Large ribosomal subunit protein uL22 (184 aa).

Positions P160–E184 are disordered. Residues K167–E184 show a composition bias toward basic residues.

It belongs to the universal ribosomal protein uL22 family. In terms of assembly, component of the large ribosomal subunit. As to expression, expressed in pancreas, lung, colon, cystic duct, gall bladder, kidney and liver. Expressed at high levels in the well differentiated pancreatic tumor cell lines HPAF, COLO 357 and Capan-1, the moderately differentiated pancreatic tumor cell lines T3M-4, AsPc-1 and BxPc-3, the poorly differentiated pancreatic tumor cell line MIA PaCa-2, and the pancreatic tumor cell lines of undefined differentiation status such as SW979. Expressed at lower levels in the poorly differentiated pancreatic tumor cell lines HCG-25 and PANC-1.

It localises to the cytoplasm. Functionally, component of the large ribosomal subunit. The ribosome is a large ribonucleoprotein complex responsible for the synthesis of proteins in the cell. The chain is Large ribosomal subunit protein uL22 (RPL17) from Homo sapiens (Human).